The following is a 458-amino-acid chain: ATP synthase subunit beta (458 aa).

148–155 contacts ATP; that stretch reads GGAGVGKT.

It belongs to the ATPase alpha/beta chains family. F-type ATPases have 2 components, CF(1) - the catalytic core - and CF(0) - the membrane proton channel. CF(1) has five subunits: alpha(3), beta(3), gamma(1), delta(1), epsilon(1). CF(0) has three main subunits: a(1), b(2) and c(9-12). The alpha and beta chains form an alternating ring which encloses part of the gamma chain. CF(1) is attached to CF(0) by a central stalk formed by the gamma and epsilon chains, while a peripheral stalk is formed by the delta and b chains.

Its subcellular location is the cell inner membrane. The catalysed reaction is ATP + H2O + 4 H(+)(in) = ADP + phosphate + 5 H(+)(out). Functionally, produces ATP from ADP in the presence of a proton gradient across the membrane. The catalytic sites are hosted primarily by the beta subunits. In Actinobacillus succinogenes (strain ATCC 55618 / DSM 22257 / CCUG 43843 / 130Z), this protein is ATP synthase subunit beta.